We begin with the raw amino-acid sequence, 230 residues long: UPF0173 metal-dependent hydrolase LI0883 (230 aa).

This sequence belongs to the UPF0173 family.

The chain is UPF0173 metal-dependent hydrolase LI0883 from Lawsonia intracellularis (strain PHE/MN1-00).